Consider the following 732-residue polypeptide: X-ray repair cross-complementing protein 5 (732 aa).

Residues 9-231 (AVVLCMDVGF…DEIYSFSESL (223 aa)) enclose the VWFA domain. Positions 138–165 (LSSRFSKSQLDIIIHSLKKCDISLQFFL) are leucine-zipper. Lysine 144 carries the post-translational modification N6-acetyllysine. A Glycyl lysine isopeptide (Lys-Gly) (interchain with G-Cter in SUMO2) cross-link involves residue lysine 195. Residues 253–452 (IGSNLSIRIA…KYAPTEAQLN (200 aa)) enclose the Ku domain. 2 positions are modified to phosphoserine: serine 255 and serine 258. An N6-acetyllysine modification is found at lysine 265. Serine 318 bears the Phosphoserine mark. Lysine 332 carries the N6-acetyllysine modification. Residues lysine 532 and lysine 534 each participate in a glycyl lysine isopeptide (Lys-Gly) (interchain with G-Cter in SUMO2) cross-link. Phosphothreonine is present on threonine 535. Glycyl lysine isopeptide (Lys-Gly) (interchain with G-Cter in SUMO2) cross-links involve residues lysine 566 and lysine 568. Phosphoserine; by PRKDC is present on residues serine 577, serine 579, and serine 580. 2 positions are modified to N6-acetyllysine: lysine 660 and lysine 665. Residues lysine 669 and lysine 688 each participate in a glycyl lysine isopeptide (Lys-Gly) (interchain with G-Cter in SUMO2) cross-link. Position 715 is a phosphothreonine; by PRKDC (threonine 715). The short motif at 720-728 (EEGGDVDDL) is the EEXXXDL motif element.

The protein belongs to the ku80 family. As to quaternary structure, heterodimer composed of XRCC5/Ku80 and XRCC6/Ku70; heterodimerization stabilizes XRCC5 protein. Component of the core long-range non-homologous end joining (NHEJ) complex (also named DNA-PK complex) composed of PRKDC, LIG4, XRCC4, XRCC6/Ku70, XRCC5/Ku86 and NHEJ1/XLF. Additional component of the NHEJ complex includes PAXX. Following autophosphorylation, PRKDC dissociates from DNA, leading to formation of the short-range NHEJ complex, composed of LIG4, XRCC4, XRCC6/Ku70, XRCC5/Ku86 and NHEJ1/XLF. The XRCC5-XRCC6 dimer also associates with NAA15, and this complex displays DNA binding activity towards the osteocalcin FGF response element (OCFRE). In addition, XRCC5 binds to the osteoblast-specific transcription factors MSX2 and RUNX2. Interacts with ELF3. Interacts with APLF (via KBM motif). The XRCC5/XRCC6 dimer associates in a DNA-dependent manner with APEX1. Identified in a complex with DEAF1 and XRCC6. Interacts with NR4A3; the DNA-dependent protein kinase complex DNA-PK phosphorylates and activates NR4A3 and prevents NR4A3 ubiquitinylation and degradation. Interacts with RNF138. Interacts with CYREN isoform 1 (CYREN-1) and isoform 4 (CYREN-2) (via KBM motif). Interacts with WRN (via KBM motif). Interacts (via N-terminus) with HSF1 (via N-terminus); this interaction is direct and prevents XRCC5/XRCC6 heterodimeric binding and non-homologous end joining (NHEJ) repair activities induced by ionizing radiation (IR). Interacts with DHX9; this interaction occurs in a RNA-dependent manner. Part of the HDP-RNP complex composed of at least HEXIM1, PRKDC, XRCC5, XRCC6, paraspeckle proteins (SFPQ, NONO, PSPC1, RBM14, and MATR3) and NEAT1 RNA. Interacts with ERCC6. The XRCC5-XRCC6 dimer associates with ALKBH2. Interacts with TPRN; TPRN interacts with a number of DNA damage response proteins, is recruited to sites of DNA damage and may play a role in DNA damage repair. Interacts with ERCC6L2. In terms of assembly, (Microbial infection) Interacts with human T-cell leukemia virus 1/HTLV-1 protein HBZ. Post-translationally, ADP-ribosylated by PARP3. In terms of processing, phosphorylated on serine residues. Phosphorylation by PRKDC may enhance helicase activity. Sumoylated. Post-translationally, ubiquitinated by RNF8 via 'Lys-48'-linked ubiquitination following DNA damage, leading to its degradation and removal from DNA damage sites. Ubiquitinated by RNF138, leading to remove the Ku complex from DNA breaks.

The protein localises to the nucleus. It is found in the nucleolus. The protein resides in the chromosome. In terms of biological role, single-stranded DNA-dependent ATP-dependent helicase that plays a key role in DNA non-homologous end joining (NHEJ) by recruiting DNA-PK to DNA. Required for double-strand break repair and V(D)J recombination. Also has a role in chromosome translocation. The DNA helicase II complex binds preferentially to fork-like ends of double-stranded DNA in a cell cycle-dependent manner. It works in the 3'-5' direction. During NHEJ, the XRCC5-XRRC6 dimer performs the recognition step: it recognizes and binds to the broken ends of the DNA and protects them from further resection. Binding to DNA may be mediated by XRCC6. The XRCC5-XRRC6 dimer acts as a regulatory subunit of the DNA-dependent protein kinase complex DNA-PK by increasing the affinity of the catalytic subunit PRKDC to DNA by 100-fold. The XRCC5-XRRC6 dimer is probably involved in stabilizing broken DNA ends and bringing them together. The assembly of the DNA-PK complex to DNA ends is required for the NHEJ ligation step. The XRCC5-XRRC6 dimer probably also acts as a 5'-deoxyribose-5-phosphate lyase (5'-dRP lyase), by catalyzing the beta-elimination of the 5' deoxyribose-5-phosphate at an abasic site near double-strand breaks. XRCC5 probably acts as the catalytic subunit of 5'-dRP activity, and allows to 'clean' the termini of abasic sites, a class of nucleotide damage commonly associated with strand breaks, before such broken ends can be joined. The XRCC5-XRRC6 dimer together with APEX1 acts as a negative regulator of transcription. In association with NAA15, the XRCC5-XRRC6 dimer binds to the osteocalcin promoter and activates osteocalcin expression. As part of the DNA-PK complex, involved in the early steps of ribosome assembly by promoting the processing of precursor rRNA into mature 18S rRNA in the small-subunit processome. Binding to U3 small nucleolar RNA, recruits PRKDC and XRCC5/Ku86 to the small-subunit processome. Plays a role in the regulation of DNA virus-mediated innate immune response by assembling into the HDP-RNP complex, a complex that serves as a platform for IRF3 phosphorylation and subsequent innate immune response activation through the cGAS-STING pathway. The protein is X-ray repair cross-complementing protein 5 (XRCC5) of Homo sapiens (Human).